Consider the following 183-residue polypeptide: uncharacterized protein (183 aa).

3 disordered regions span residues 1–44 (MPFY…VMTA), 68–137 (GRAG…LGLR), and 163–183 (RDDP…VWPE).

This is an uncharacterized protein from Dryophytes versicolor (chameleon treefrog).